Here is a 286-residue protein sequence, read N- to C-terminus: tRNA uridine(34) hydroxylase (286 aa).

A Rhodanese domain is found at Arg-130–Leu-225. Cys-185 acts as the Cysteine persulfide intermediate in catalysis.

The protein belongs to the TrhO family.

It catalyses the reaction uridine(34) in tRNA + AH2 + O2 = 5-hydroxyuridine(34) in tRNA + A + H2O. Catalyzes oxygen-dependent 5-hydroxyuridine (ho5U) modification at position 34 in tRNAs. This is tRNA uridine(34) hydroxylase from Rhodococcus erythropolis (strain PR4 / NBRC 100887).